Here is a 595-residue protein sequence, read N- to C-terminus: Elongation factor 4 (595 aa).

A tr-type G domain is found at lysine 2–lysine 183. GTP contacts are provided by residues aspartate 14–threonine 19 and asparagine 130–aspartate 133.

This sequence belongs to the TRAFAC class translation factor GTPase superfamily. Classic translation factor GTPase family. LepA subfamily.

Its subcellular location is the cell inner membrane. The enzyme catalyses GTP + H2O = GDP + phosphate + H(+). In terms of biological role, required for accurate and efficient protein synthesis under certain stress conditions. May act as a fidelity factor of the translation reaction, by catalyzing a one-codon backward translocation of tRNAs on improperly translocated ribosomes. Back-translocation proceeds from a post-translocation (POST) complex to a pre-translocation (PRE) complex, thus giving elongation factor G a second chance to translocate the tRNAs correctly. Binds to ribosomes in a GTP-dependent manner. This is Elongation factor 4 from Parabacteroides distasonis (strain ATCC 8503 / DSM 20701 / CIP 104284 / JCM 5825 / NCTC 11152).